Here is a 305-residue protein sequence, read N- to C-terminus: MDNTTTTEPPKQPCTRNTLITQQIIPMLYCVVFITGVLLNGISGWIFFYVPSSKSFIIYLKNIVVADFLMGLTFPFKVLSDSGLGPWQLNVFVFRVSAVIFYVNMYVSIAFFGLISFDRYYKIVKPLLVSIVQSVNYSKVLSVLVWVLMLLLAVPNIILTNQSVKDVTNIQCMELKNELGRKWHKASNYVFVSIFWIVFLLLTVFYMAITRKIFKSHLKSRKNSISVKRKSSRNIFSIVLAFVACFAPYHVARIPYTKSQTEGHYSCQAKETLLYTKEFTLLLSAANVCLDPISISSYASRLEKS.

The Extracellular segment spans residues 1-29 (MDNTTTTEPPKQPCTRNTLITQQIIPMLY). An N-linked (GlcNAc...) asparagine glycan is attached at Asn3. A helical membrane pass occupies residues 30 to 50 (CVVFITGVLLNGISGWIFFYV). At 51 to 55 (PSSKS) the chain is on the cytoplasmic side. Residues 56–76 (FIIYLKNIVVADFLMGLTFPF) traverse the membrane as a helical segment. Over 77-96 (KVLSDSGLGPWQLNVFVFRV) the chain is Extracellular. A helical transmembrane segment spans residues 97-117 (SAVIFYVNMYVSIAFFGLISF). At 118-139 (DRYYKIVKPLLVSIVQSVNYSK) the chain is on the cytoplasmic side. The chain crosses the membrane as a helical span at residues 140-160 (VLSVLVWVLMLLLAVPNIILT). Asn161 is a glycosylation site (N-linked (GlcNAc...) asparagine). At 161 to 188 (NQSVKDVTNIQCMELKNELGRKWHKASN) the chain is on the extracellular side. A helical membrane pass occupies residues 189–209 (YVFVSIFWIVFLLLTVFYMAI). At 210–234 (TRKIFKSHLKSRKNSISVKRKSSRN) the chain is on the cytoplasmic side. A helical transmembrane segment spans residues 235–255 (IFSIVLAFVACFAPYHVARIP). Residues 256-278 (YTKSQTEGHYSCQAKETLLYTKE) lie on the Extracellular side of the membrane. Residues 279 to 299 (FTLLLSAANVCLDPISISSYA) form a helical membrane-spanning segment. The Cytoplasmic segment spans residues 300-305 (SRLEKS).

The protein belongs to the G-protein coupled receptor 1 family.

It localises to the cell membrane. Functionally, receptor for UDP-glucose coupled to G-proteins. This is P2Y purinoceptor 14 (P2ry14) from Rattus norvegicus (Rat).